The following is a 906-amino-acid chain: Cadherin-2 (906 aa).

The signal sequence occupies residues 1-25 (MCRIAGAPRTLLPLLAALLQASVEA). Positions 26 to 159 (SGEIALCKTG…HSGALQRQKR (134 aa)) are excised as a propeptide. Cadherin domains are found at residues 160–267 (DWVI…RPEF), 268–382 (LHQV…PPEF), 383–497 (TAMT…NPYF), 498–603 (APNP…DNAP), and 604–717 (QVLP…RIVG). The Extracellular portion of the chain corresponds to 160–724 (DWVIPPINLP…IVGAGLGTGA (565 aa)). Glutamate 170 is a Ca(2+) binding site. N-linked (GlcNAc...) asparagine glycosylation occurs at asparagine 190. Aspartate 226, glutamate 228, aspartate 259, methionine 260, asparagine 261, aspartate 262, and asparagine 263 together coordinate Ca(2+). A glycan (N-linked (GlcNAc...) asparagine) is linked at asparagine 273. Ca(2+) is bound by residues aspartate 293, aspartate 295, and asparagine 301. Asparagine 325 carries an N-linked (GlcNAc...) asparagine glycan. Aspartate 353 contributes to the Ca(2+) binding site. Residues asparagine 402, asparagine 572, asparagine 651, and asparagine 692 are each glycosylated (N-linked (GlcNAc...) asparagine). A helical membrane pass occupies residues 725 to 745 (IIAILLCIIILLILVLMFVVW). Topologically, residues 746–906 (MKRRDKERQA…LADMYGGGDD (161 aa)) are cytoplasmic. Residues 863–880 (SGSTAGSLSSLNSSSSGG) show a composition bias toward low complexity. The disordered stretch occupies residues 863-883 (SGSTAGSLSSLNSSSSGGDQD).

Homodimer (via extracellular region). Can also form heterodimers with other cadherins (via extracellular region). Dimerization occurs in trans, i.e. with a cadherin chain from another cell. Interacts with CDCP1. Interacts with PCDH8; this complex may also include TAOK2. The interaction with PCDH8 may lead to internalization through TAOK2/p38 MAPK pathway. Identified in a complex containing FGFR4, NCAM1, CDH2, PLCG1, FRS2, SRC, SHC1, GAP43 and CTTN. May interact with OBSCN (via protein kinase domain 2). Interacts with FBXO45. In terms of processing, cleaved by MMP24. Ectodomain cleavage leads to the generation of a soluble 90 kDa N-terminal soluble fragment and a 45 kDa membrane-bound C-terminal fragment 1 (CTF1), which is further cleaved by gamma-secretase into a 35 kDa. Cleavage in neural stem cells by MMP24 affects CDH2-mediated anchorage of neural stem cells to ependymocytes in the adult subependymal zone, leading to modulate neural stem cell quiescence. Post-translationally, may be phosphorylated by OBSCN. O-glycosylated on Ser and Thr residues. Expressed in cardiac muscle (at protein level).

The protein resides in the cell membrane. It is found in the sarcolemma. Its subcellular location is the cell junction. The protein localises to the adherens junction. It localises to the desmosome. The protein resides in the cell surface. Calcium-dependent cell adhesion protein; preferentially mediates homotypic cell-cell adhesion by dimerization with a CDH2 chain from another cell. Cadherins may thus contribute to the sorting of heterogeneous cell types. Acts as a regulator of neural stem cells quiescence by mediating anchorage of neural stem cells to ependymocytes in the adult subependymal zone: upon cleavage by MMP24, CDH2-mediated anchorage is affected, leading to modulate neural stem cell quiescence. Plays a role in cell-to-cell junction formation between pancreatic beta cells and neural crest stem (NCS) cells, promoting the formation of processes by NCS cells. Required for proper neurite branching. Required for pre- and postsynaptic organization. CDH2 may be involved in neuronal recognition mechanism. In hippocampal neurons, may regulate dendritic spine density. This chain is Cadherin-2 (Cdh2), found in Mus musculus (Mouse).